The chain runs to 149 residues: UPF0310 protein msl3206 (149 aa).

It belongs to the UPF0310 family.

The protein is UPF0310 protein msl3206 of Mesorhizobium japonicum (strain LMG 29417 / CECT 9101 / MAFF 303099) (Mesorhizobium loti (strain MAFF 303099)).